Consider the following 405-residue polypeptide: 4-hydroxy-3-methylbut-2-en-1-yl diphosphate synthase (ferredoxin) (405 aa).

[4Fe-4S] cluster contacts are provided by Cys314, Cys317, Cys348, and Glu355.

Belongs to the IspG family. [4Fe-4S] cluster is required as a cofactor.

The enzyme catalyses (2E)-4-hydroxy-3-methylbut-2-enyl diphosphate + 2 oxidized [2Fe-2S]-[ferredoxin] + H2O = 2-C-methyl-D-erythritol 2,4-cyclic diphosphate + 2 reduced [2Fe-2S]-[ferredoxin] + H(+). The protein operates within isoprenoid biosynthesis; isopentenyl diphosphate biosynthesis via DXP pathway; isopentenyl diphosphate from 1-deoxy-D-xylulose 5-phosphate: step 5/6. Converts 2C-methyl-D-erythritol 2,4-cyclodiphosphate (ME-2,4cPP) into 1-hydroxy-2-methyl-2-(E)-butenyl 4-diphosphate. The sequence is that of 4-hydroxy-3-methylbut-2-en-1-yl diphosphate synthase (ferredoxin) from Prochlorococcus marinus subsp. pastoris (strain CCMP1986 / NIES-2087 / MED4).